The primary structure comprises 47 residues: Large ribosomal subunit protein bL33C (47 aa).

It belongs to the bacterial ribosomal protein bL33 family.

This Staphylococcus epidermidis (strain ATCC 35984 / DSM 28319 / BCRC 17069 / CCUG 31568 / BM 3577 / RP62A) protein is Large ribosomal subunit protein bL33C.